The following is a 508-amino-acid chain: UDP-N-acetylmuramoylalanine--D-glutamate ligase (508 aa).

138 to 144 (GTNGKTT) contacts ATP. Residues 294–314 (FDEPAPRRKKDAPPPTRAGGR) form a disordered region.

The protein belongs to the MurCDEF family.

It localises to the cytoplasm. It carries out the reaction UDP-N-acetyl-alpha-D-muramoyl-L-alanine + D-glutamate + ATP = UDP-N-acetyl-alpha-D-muramoyl-L-alanyl-D-glutamate + ADP + phosphate + H(+). It functions in the pathway cell wall biogenesis; peptidoglycan biosynthesis. Cell wall formation. Catalyzes the addition of glutamate to the nucleotide precursor UDP-N-acetylmuramoyl-L-alanine (UMA). This Bordetella parapertussis (strain 12822 / ATCC BAA-587 / NCTC 13253) protein is UDP-N-acetylmuramoylalanine--D-glutamate ligase.